A 201-amino-acid chain; its full sequence is Glutathione S-transferase GstA (201 aa).

The GST N-terminal domain occupies 1–81 (MKLFYKPGAC…YLADSVPDRQ (81 aa)). Glutathione is bound by residues Cys-10, Lys-35, Val-52, 65-66 (EG), Asn-99, and 103-106 (TELH). The region spanning 87-201 (NSISRYKTIE…QDALSAEGLK (115 aa)) is the GST C-terminal domain.

This sequence belongs to the GST superfamily. Beta family. In terms of assembly, homodimer.

It is found in the cytoplasm. It carries out the reaction RX + glutathione = an S-substituted glutathione + a halide anion + H(+). In terms of biological role, conjugation of reduced glutathione to a wide number of exogenous and endogenous hydrophobic electrophiles. The protein is Glutathione S-transferase GstA (gstA) of Escherichia coli O157:H7.